The primary structure comprises 132 residues: Ribosome-binding factor A (132 aa).

The protein belongs to the RbfA family. As to quaternary structure, monomer. Binds 30S ribosomal subunits, but not 50S ribosomal subunits or 70S ribosomes.

It localises to the cytoplasm. In terms of biological role, one of several proteins that assist in the late maturation steps of the functional core of the 30S ribosomal subunit. Associates with free 30S ribosomal subunits (but not with 30S subunits that are part of 70S ribosomes or polysomes). Required for efficient processing of 16S rRNA. May interact with the 5'-terminal helix region of 16S rRNA. In Teredinibacter turnerae (strain ATCC 39867 / T7901), this protein is Ribosome-binding factor A.